The primary structure comprises 329 residues: Protein RecA (329 aa).

Glycine 63 to threonine 70 contacts ATP.

The protein belongs to the RecA family.

The protein localises to the cytoplasm. Its function is as follows. Can catalyze the hydrolysis of ATP in the presence of single-stranded DNA, the ATP-dependent uptake of single-stranded DNA by duplex DNA, and the ATP-dependent hybridization of homologous single-stranded DNAs. It interacts with LexA causing its activation and leading to its autocatalytic cleavage. In Malacoplasma penetrans (strain HF-2) (Mycoplasma penetrans), this protein is Protein RecA.